A 196-amino-acid chain; its full sequence is Putative 3-methyladenine DNA glycosylase (196 aa).

Belongs to the DNA glycosylase MPG family.

The chain is Putative 3-methyladenine DNA glycosylase from Bacillus velezensis (strain DSM 23117 / BGSC 10A6 / LMG 26770 / FZB42) (Bacillus amyloliquefaciens subsp. plantarum).